The chain runs to 206 residues: ATP-dependent Clp protease proteolytic subunit 1 (206 aa).

Serine 106 (nucleophile) is an active-site residue. The active site involves histidine 131.

Belongs to the peptidase S14 family. Fourteen ClpP subunits assemble into 2 heptameric rings which stack back to back to give a disk-like structure with a central cavity, resembling the structure of eukaryotic proteasomes.

The protein localises to the cytoplasm. The enzyme catalyses Hydrolysis of proteins to small peptides in the presence of ATP and magnesium. alpha-casein is the usual test substrate. In the absence of ATP, only oligopeptides shorter than five residues are hydrolyzed (such as succinyl-Leu-Tyr-|-NHMec, and Leu-Tyr-Leu-|-Tyr-Trp, in which cleavage of the -Tyr-|-Leu- and -Tyr-|-Trp bonds also occurs).. Functionally, cleaves peptides in various proteins in a process that requires ATP hydrolysis. Has a chymotrypsin-like activity. Plays a major role in the degradation of misfolded proteins. The polypeptide is ATP-dependent Clp protease proteolytic subunit 1 (Methylococcus capsulatus (strain ATCC 33009 / NCIMB 11132 / Bath)).